Reading from the N-terminus, the 706-residue chain is G2/M phase-specific E3 ubiquitin-protein ligase (706 aa).

The C2HC pre-PHD-type zinc-finger motif lies at 11-51; that stretch reads NLACVFCRKHDDCPNKYGEKKTKEKWNLTVHYYCLLMSSGI. The PHD-type 1 zinc-finger motif lies at 79–128; that stretch reads LKCCVCKKNGASIGCVAPRCKRSYHFPCGLQRECIFQFTGNFASFCWDHR. A PHD-type 2; degenerate zinc finger spans residues 143–193; sequence PCTICLEFIEPIPSYNILRSPCCKNAWFHRDCLQVQAINAGVFFFRCTICN. Residues 237–286 form a PHD-type 3 zinc finger; it reads RCRCKEGRDYNAPDSKWEIKRCQCCGSSGTHLACSSLRSWEQNWECLECR. One can recognise an HECT domain in the interval 371-698; sequence IWNSALDAFR…IRNTLRLEKE (328 aa).

In terms of tissue distribution, predominantly expressed in brain, liver, kidney, testes and ovary.

Its subcellular location is the nucleus. The protein localises to the nucleolus. The protein resides in the cytoplasm. It carries out the reaction S-ubiquitinyl-[E2 ubiquitin-conjugating enzyme]-L-cysteine + [acceptor protein]-L-lysine = [E2 ubiquitin-conjugating enzyme]-L-cysteine + N(6)-ubiquitinyl-[acceptor protein]-L-lysine.. Its pathway is protein modification; protein ubiquitination. Functionally, E3 ubiquitin-protein ligase which accepts ubiquitin from an E2 ubiquitin-conjugating enzyme in the form of a thioester and then directly transfers the ubiquitin to targeted substrates. Essential in early embryonic development to prevent apoptotic death. In Homo sapiens (Human), this protein is G2/M phase-specific E3 ubiquitin-protein ligase (G2E3).